The following is a 481-amino-acid chain: uncharacterized protein (481 aa).

The next 13 membrane-spanning stretches (helical) occupy residues 3–23, 33–53, 75–95, 99–119, 122–142, 155–175, 196–216, 241–261, 264–284, 303–323, 351–371, 400–420, and 443–463; these read YLPM…LLHG, FITA…YYYF, QAII…GMGE, NNMF…IVLA, IFNL…LVFL, YMIM…FLLA, IYGG…LPPF, FVLV…DYFA, HAVL…MALL, VATG…FHAI, GGLL…KLAI, IIMI…FYLI, and VFSL…PDIV.

The protein resides in the cell membrane. This is an uncharacterized protein from Methanocaldococcus jannaschii (strain ATCC 43067 / DSM 2661 / JAL-1 / JCM 10045 / NBRC 100440) (Methanococcus jannaschii).